The sequence spans 196 residues: Pyridoxal 5'-phosphate synthase subunit PdxT (196 aa).

47 to 49 (GES) contacts L-glutamine. The Nucleophile role is filled by cysteine 79. L-glutamine contacts are provided by residues arginine 106 and 134 to 135 (IR). Active-site charge relay system residues include histidine 170 and glutamate 172.

The protein belongs to the glutaminase PdxT/SNO family. In terms of assembly, in the presence of PdxS, forms a dodecamer of heterodimers. Only shows activity in the heterodimer.

It catalyses the reaction aldehydo-D-ribose 5-phosphate + D-glyceraldehyde 3-phosphate + L-glutamine = pyridoxal 5'-phosphate + L-glutamate + phosphate + 3 H2O + H(+). The catalysed reaction is L-glutamine + H2O = L-glutamate + NH4(+). It participates in cofactor biosynthesis; pyridoxal 5'-phosphate biosynthesis. Functionally, catalyzes the hydrolysis of glutamine to glutamate and ammonia as part of the biosynthesis of pyridoxal 5'-phosphate. The resulting ammonia molecule is channeled to the active site of PdxS. This is Pyridoxal 5'-phosphate synthase subunit PdxT from Bacillus velezensis (strain DSM 23117 / BGSC 10A6 / LMG 26770 / FZB42) (Bacillus amyloliquefaciens subsp. plantarum).